The primary structure comprises 59 residues: DNA gyrase inhibitor YacG (59 aa).

Residues C7, C10, C25, and C29 each coordinate Zn(2+).

The protein belongs to the DNA gyrase inhibitor YacG family. As to quaternary structure, interacts with GyrB. Zn(2+) serves as cofactor.

Functionally, inhibits all the catalytic activities of DNA gyrase by preventing its interaction with DNA. Acts by binding directly to the C-terminal domain of GyrB, which probably disrupts DNA binding by the gyrase. The chain is DNA gyrase inhibitor YacG from Geobacter sulfurreducens (strain ATCC 51573 / DSM 12127 / PCA).